The primary structure comprises 262 residues: Carbonic anhydrase 1 (262 aa).

Ala-2 is modified (N-acetylalanine). Residues 4 to 261 (LNWSYEGENG…LKGRQVKASF (258 aa)) form the Alpha-carbonic anhydrase domain. His-65 (proton donor/acceptor) is an active-site residue. The Zn(2+) site is built by His-95, His-97, and His-120. Residues Thr-200 and 200–201 (TH) each bind substrate.

This sequence belongs to the alpha-carbonic anhydrase family. Zn(2+) is required as a cofactor.

The protein resides in the cytoplasm. It catalyses the reaction hydrogencarbonate + H(+) = CO2 + H2O. The catalysed reaction is urea = cyanamide + H2O. With respect to regulation, inhibited by acetazolamide. In terms of biological role, catalyzes the reversible hydration of carbon dioxide. Can hydrate cyanamide to urea. In Monodelphis domestica (Gray short-tailed opossum), this protein is Carbonic anhydrase 1 (CA1).